The primary structure comprises 682 residues: Potassium-transporting ATPase ATP-binding subunit (682 aa).

The next 4 membrane-spanning stretches (helical) occupy residues 34–54 (PVMFVVWAGSVLTTLLTLAMV), 62–82 (ALFTGVISLWLWFTVLFANFA), 219–239 (IALTILLIALTIVFLLATATL), and 254–274 (VLVALLVCLIPTTIGGLLSAI). Asp-307 (4-aspartylphosphate intermediate) is an active-site residue. ATP-binding positions include Asp-344, Glu-348, 377 to 384 (FTAQSRMS), and Lys-395. Residues Asp-518 and Asp-522 each coordinate Mg(2+). Transmembrane regions (helical) follow at residues 588-608 (FAIIPAAFAATYPQLNALNVM), 616-636 (AILSAVIFNALIIIFLIPLAL), and 662-682 (LVVPFIGIKVIDVLLTLLGLA).

This sequence belongs to the cation transport ATPase (P-type) (TC 3.A.3) family. Type IA subfamily. As to quaternary structure, the system is composed of three essential subunits: KdpA, KdpB and KdpC.

It is found in the cell inner membrane. It catalyses the reaction K(+)(out) + ATP + H2O = K(+)(in) + ADP + phosphate + H(+). Functionally, part of the high-affinity ATP-driven potassium transport (or Kdp) system, which catalyzes the hydrolysis of ATP coupled with the electrogenic transport of potassium into the cytoplasm. This subunit is responsible for energy coupling to the transport system and for the release of the potassium ions to the cytoplasm. This is Potassium-transporting ATPase ATP-binding subunit from Salmonella schwarzengrund (strain CVM19633).